Consider the following 83-residue polypeptide: uncharacterized protein (83 aa).

This is an uncharacterized protein from Schizosaccharomyces pombe (strain 972 / ATCC 24843) (Fission yeast).